The following is a 193-amino-acid chain: Superoxide dismutase [Fe] (193 aa).

A Fe cation-binding site is contributed by H27. Position 51 is an N6-acetyllysine (K51). Residues H74, D157, and H161 each contribute to the Fe cation site.

The protein belongs to the iron/manganese superoxide dismutase family. As to quaternary structure, homodimer. Fe cation serves as cofactor.

It catalyses the reaction 2 superoxide + 2 H(+) = H2O2 + O2. In terms of biological role, destroys superoxide anion radicals which are normally produced within the cells and which are toxic to biological systems. The protein is Superoxide dismutase [Fe] (sodB) of Escherichia coli O157:H7.